The following is a 428-amino-acid chain: Gamma-glutamyl phosphate reductase (428 aa).

The protein belongs to the gamma-glutamyl phosphate reductase family.

It localises to the cytoplasm. It carries out the reaction L-glutamate 5-semialdehyde + phosphate + NADP(+) = L-glutamyl 5-phosphate + NADPH + H(+). The protein operates within amino-acid biosynthesis; L-proline biosynthesis; L-glutamate 5-semialdehyde from L-glutamate: step 2/2. Catalyzes the NADPH-dependent reduction of L-glutamate 5-phosphate into L-glutamate 5-semialdehyde and phosphate. The product spontaneously undergoes cyclization to form 1-pyrroline-5-carboxylate. The polypeptide is Gamma-glutamyl phosphate reductase (Picosynechococcus sp. (strain ATCC 27264 / PCC 7002 / PR-6) (Agmenellum quadruplicatum)).